The sequence spans 624 residues: MNSSTSSENVFINSFSYLNQTSQAVISGNSTFANVINFPYRLGLSFIGAVNLQYEQTVKSEEIPPTLRSVFDTIGFFFSPYAIFCFVIAIVLNRFVVFYAVLNNGSRRTLPLWLSNVFHVSAVVVLAMVSLGPLTLGKDFKILGDPAFAQEKFLLNIFYAFAYSYCVETIFTIMRNSSPLEGTDYSLFELSIQFYTMTNNNTKFLDSPDYIIDCSMAILSRILIHLVEIFRLRNYRLLFSTIMNLCHICYLGIRVKQGGWKSLPFSVKFRHFPKLFSVSIICLSLLIFKLSCLIRWDPFGKSRNSCELLQFYPLSRNWKKYLNYTGEEDFSAMATKFALLLCSGTELMEKGIRREFPAINIPDNVNEKFFISGYLNELSKPYKENTSISFPKKNSSILKQRFFLMFPKSIIWIMKKLVGQVFFGFRDNKDEDIPDNDPSKMLKITKTNSLNNSAGHKEDIELELLNTSDDEYSEDYEPSEVESLGDSDEENLEEDSLIFNETRDALLDLFSSEDNEVHTDYNWIMSTSRILQQKLLSDKTLTRASILDTKLSEVDETFGTESDFDLSCAVCKVNERNTVLWPCRCFAICEDCRISLGLRGFSTCVCCRSKVHGYCKVHPVSDSK.

Over M1–S69 the chain is Perinuclear space. 3 N-linked (GlcNAc...) asparagine glycosylation sites follow: N2, N19, and N29. Residues V70–I90 traverse the membrane as a helical segment. Topologically, residues V91–N116 are nuclear. The helical transmembrane segment at V117–G137 threads the bilayer. Over K138–K152 the chain is Perinuclear space. Residues F153–I173 form a helical membrane-spanning segment. Over M174–D209 the chain is Nuclear. The chain crosses the membrane as a helical span at residues Y210–F230. The Perinuclear space segment spans residues R231–P273. Residues K274–I294 form a helical membrane-spanning segment. The Nuclear portion of the chain corresponds to R295–K624. Residues T467 to E490 form a disordered region. The segment covering S468–E490 has biased composition (acidic residues). The RING-type; atypical zinc-finger motif lies at C568–R608.

Component of the Asi complex, which contains ASI1, ASI2 and ASI3. Interacts directly with ASI3. In terms of processing, glycosylation is not required for ASI1 function.

It localises to the nucleus inner membrane. The enzyme catalyses S-ubiquitinyl-[E2 ubiquitin-conjugating enzyme]-L-cysteine + [acceptor protein]-L-lysine = [E2 ubiquitin-conjugating enzyme]-L-cysteine + N(6)-ubiquitinyl-[acceptor protein]-L-lysine.. Functionally, E3 ubiquitin-protein ligase which transfers ubiquitin to substrates promoting their degradation. Part of the nuclear inner membrane (INM)-specific branch of the ER-associated degradation (ERAD) pathway, required for the elimination of misfolded proteins in the INM, a specialized ER subdomain. Required for ERG11 degradation. Negative regulator of SPS-sensor signaling. Together with ASI2 and ASI3, prevents the unprocessed precursor forms of STP1 and STP2 that escape cytoplasmic anchoring from inducing SPS-sensor-regulated genes in the absence of inducing signals. Controls amino acid permease (AAP) gene expression in response to amino acid availability, a process mediated by the transcription factors STP1 and STP1. This Saccharomyces cerevisiae (strain ATCC 204508 / S288c) (Baker's yeast) protein is ERAD-associated E3 ubiquitin-protein ligase ASI1 (ASI1).